The primary structure comprises 111 residues: MVGLSRLAGGGLLLLLLLALLPLALDGKPAPLPQALPEALAGGTTALRRDVTEEQQQQLVAEESSGPAAGRSDPKIGDGCFGLPLDHIGSVSGLGCNRPVQNRPKQIPGGS.

An N-terminal signal peptide occupies residues 1–27 (MVGLSRLAGGGLLLLLLLALLPLALDG). A propeptide spanning residues 28–71 (KPAPLPQALPEALAGGTTALRRDVTEEQQQQLVAEESSGPAAGR) is cleaved from the precursor. Disordered stretches follow at residues 51–77 (VTEEQQQQLVAEESSGPAAGRSDPKIG) and 92–111 (SGLGCNRPVQNRPKQIPGGS). The cysteines at positions 80 and 96 are disulfide-linked. Positions 107–111 (IPGGS) are excised as a propeptide.

Belongs to the natriuretic peptide family. Expressed by the venom gland.

It is found in the secreted. Snake venom natriuretic peptide that exhibits vasoactive and probable hypotensive activity. Is only weakly active on natriuretic peptide receptor-C (NPR3). The chain is Natriuretic peptide TNP-b from Oxyuranus scutellatus scutellatus (Australian taipan).